The sequence spans 272 residues: Ribosome maturation factor RimP (272 aa).

The tract at residues Gln209 to Asp272 is disordered. The span at Asn250–Ile266 shows a compositional bias: basic and acidic residues.

It belongs to the RimP family.

It localises to the cytoplasm. Its function is as follows. Required for maturation of 30S ribosomal subunits. The protein is Ribosome maturation factor RimP of Rhodopseudomonas palustris (strain BisA53).